A 196-amino-acid polypeptide reads, in one-letter code: MAENERTTENFQPQDPSYAEAATTEASAAEATGFIARIDQLAAENSDLQKKLADYEQKYTRLMADFDNFRKRTQREKDELAYFVSAKLLKDILPVFDNFDRARAFAQPDNEREEKLHNSYQQVYRQFLSVLEKMGVTAMEAIGQPFDPAQHEAILREESAGVSQETVVAELQKGYLLADKVLRPAMVKVAIPEAGS.

The segment at 1 to 24 is disordered; it reads MAENERTTENFQPQDPSYAEAATT.

The protein belongs to the GrpE family. As to quaternary structure, homodimer.

The protein resides in the cytoplasm. Its function is as follows. Participates actively in the response to hyperosmotic and heat shock by preventing the aggregation of stress-denatured proteins, in association with DnaK and GrpE. It is the nucleotide exchange factor for DnaK and may function as a thermosensor. Unfolded proteins bind initially to DnaJ; upon interaction with the DnaJ-bound protein, DnaK hydrolyzes its bound ATP, resulting in the formation of a stable complex. GrpE releases ADP from DnaK; ATP binding to DnaK triggers the release of the substrate protein, thus completing the reaction cycle. Several rounds of ATP-dependent interactions between DnaJ, DnaK and GrpE are required for fully efficient folding. The polypeptide is Protein GrpE (Gloeobacter violaceus (strain ATCC 29082 / PCC 7421)).